The sequence spans 590 residues: Laccase-19 (590 aa).

The signal sequence occupies residues 1-28 (MEKLSMVTSLLCAITVAVLAVAVVSGEA). Plastocyanin-like domains lie at 36–152 (VVHE…PRDG) and 161–315 (KDVP…YAGT). N-linked (GlcNAc...) asparagine glycans are attached at residues N41 and N47. Residues H86 and H88 each contribute to the Cu cation site. An N-linked (GlcNAc...) asparagine glycan is attached at N120. Residues H131 and H133 each coordinate Cu cation. N205, N344, N378, N397, N434, and N465 each carry an N-linked (GlcNAc...) asparagine glycan. Positions 424–566 (DFPIRPPRPF…ATAFIVEDGP (143 aa)) constitute a Plastocyanin-like 3 domain. Cu cation is bound by residues N483, H486, H488, H545, C546, H547, H551, and M556. Residues 565 to 590 (GPTPETSLPPPPPEFKRCGNNGLSQP) are disordered.

Belongs to the multicopper oxidase family. Cu cation serves as cofactor.

Its subcellular location is the secreted. It is found in the extracellular space. It localises to the apoplast. The enzyme catalyses 4 hydroquinone + O2 = 4 benzosemiquinone + 2 H2O. Functionally, lignin degradation and detoxification of lignin-derived products. The protein is Laccase-19 (LAC19) of Oryza sativa subsp. japonica (Rice).